The primary structure comprises 183 residues: Peptidyl-tRNA hydrolase (183 aa).

A tRNA-binding site is contributed by Y15. H20 serves as the catalytic Proton acceptor. TRNA-binding residues include Y67 and N69.

This sequence belongs to the PTH family. As to quaternary structure, monomer.

The protein localises to the cytoplasm. The catalysed reaction is an N-acyl-L-alpha-aminoacyl-tRNA + H2O = an N-acyl-L-amino acid + a tRNA + H(+). In terms of biological role, hydrolyzes ribosome-free peptidyl-tRNAs (with 1 or more amino acids incorporated), which drop off the ribosome during protein synthesis, or as a result of ribosome stalling. Functionally, catalyzes the release of premature peptidyl moieties from peptidyl-tRNA molecules trapped in stalled 50S ribosomal subunits, and thus maintains levels of free tRNAs and 50S ribosomes. This chain is Peptidyl-tRNA hydrolase, found in Chlamydia caviae (strain ATCC VR-813 / DSM 19441 / 03DC25 / GPIC) (Chlamydophila caviae).